The primary structure comprises 328 residues: Mitochondrial thiamine pyrophosphate carrier 1 (328 aa).

Solcar repeat units lie at residues Gly-12–Leu-110, Pro-120–Val-208, and Pro-221–Leu-316. Helical transmembrane passes span Val-17–Val-37, Leu-79–Ile-99, Phe-126–Leu-146, Ser-185–Leu-205, Ala-227–Val-247, and Gly-291–Trp-308.

It belongs to the mitochondrial carrier (TC 2.A.29) family.

The protein resides in the mitochondrion inner membrane. Functionally, mitochondrial transporter that mediates uptake of thiamine pyrophosphate (ThPP) into mitochondria. The protein is Mitochondrial thiamine pyrophosphate carrier 1 (tpc1) of Emericella nidulans (strain FGSC A4 / ATCC 38163 / CBS 112.46 / NRRL 194 / M139) (Aspergillus nidulans).